The sequence spans 470 residues: Serine/threonine-protein kinase PEPKR2 (470 aa).

The 249-residue stretch at 107 to 355 (YVFGRNIGKG…ADEVLRHPWI (249 aa)) folds into the Protein kinase domain. ATP is bound by residues 113–121 (IGKGKFGSV) and Lys-136. Catalysis depends on Asp-224, which acts as the Proton acceptor. Residues 377–386 (GSSTCLQNRS) are compositionally biased toward polar residues. Disordered stretches follow at residues 377-419 (GSST…EEED) and 441-464 (RSRV…TSTS). The span at 387-403 (PTEKTDLNRADREKKIP) shows a compositional bias: basic and acidic residues. A compositionally biased stretch (polar residues) spans 445–464 (CSPTNNPIEQQHSSNLTSTS).

The protein belongs to the protein kinase superfamily. Ser/Thr protein kinase family.

It catalyses the reaction L-seryl-[protein] + ATP = O-phospho-L-seryl-[protein] + ADP + H(+). The catalysed reaction is L-threonyl-[protein] + ATP = O-phospho-L-threonyl-[protein] + ADP + H(+). The chain is Serine/threonine-protein kinase PEPKR2 (PEPKR2) from Arabidopsis thaliana (Mouse-ear cress).